Consider the following 331-residue polypeptide: D-alanine--D-alanine ligase (331 aa).

Positions 112–314 (KRIWRSEGLP…YEDLCLRLLA (203 aa)) constitute an ATP-grasp domain. 138 to 193 (LQTLGAPMIVKPAREGSTIGLSKVHQAQQCASAYLLAARYDPEVLCEQFIAGDELT) is a binding site for ATP. Residues Asp-267, Glu-281, and Asn-283 each contribute to the Mg(2+) site.

This sequence belongs to the D-alanine--D-alanine ligase family. Mg(2+) is required as a cofactor. Mn(2+) serves as cofactor.

It is found in the cytoplasm. It carries out the reaction 2 D-alanine + ATP = D-alanyl-D-alanine + ADP + phosphate + H(+). The protein operates within cell wall biogenesis; peptidoglycan biosynthesis. In terms of biological role, cell wall formation. This Verminephrobacter eiseniae (strain EF01-2) protein is D-alanine--D-alanine ligase.